Consider the following 313-residue polypeptide: Transcription initiation factor IIB 2 (313 aa).

A TFIIB-type zinc finger spans residues 13–44 (APKRCPECHSEHLIRDYEHGELICADCGAVIE). Residues Cys17, Cys20, Cys36, and Cys39 each coordinate Zn(2+). Repeat copies occupy residues 130–213 (QLLN…AKEL) and 224–305 (SYIA…EISK).

The protein belongs to the TFIIB family.

Functionally, stabilizes TBP binding to an archaeal box-A promoter. Also responsible for recruiting RNA polymerase II to the pre-initiation complex (DNA-TBP-TFIIB). This chain is Transcription initiation factor IIB 2, found in Thermoplasma volcanium (strain ATCC 51530 / DSM 4299 / JCM 9571 / NBRC 15438 / GSS1).